A 296-amino-acid polypeptide reads, in one-letter code: GTPase Era (296 aa).

Residues 7 to 174 (KAGYISIVGR…TEVIRHYLPE (168 aa)) form the Era-type G domain. Residues 15–22 (GRPNVGKS) form a G1 region. 15–22 (GRPNVGKS) lines the GTP pocket. The segment at 41-45 (QTTRH) is G2. The tract at residues 62–65 (DTPG) is G3. GTP-binding positions include 62–66 (DTPGF) and 123–126 (NKID). Residues 123–126 (NKID) are G4. The tract at residues 153 to 155 (VSA) is G5. A KH type-2 domain is found at 205 to 281 (IGEEVPYSVS…YLEIWVKVKS (77 aa)).

Belongs to the TRAFAC class TrmE-Era-EngA-EngB-Septin-like GTPase superfamily. Era GTPase family. As to quaternary structure, monomer.

The protein localises to the cytoplasm. The protein resides in the cell inner membrane. An essential GTPase that binds both GDP and GTP, with rapid nucleotide exchange. Plays a role in 16S rRNA processing and 30S ribosomal subunit biogenesis and possibly also in cell cycle regulation and energy metabolism. The protein is GTPase Era of Nitrosomonas eutropha (strain DSM 101675 / C91 / Nm57).